The chain runs to 347 residues: 4-hydroxy-2-oxovalerate aldolase 2 (347 aa).

A Pyruvate carboxyltransferase domain is found at 7 to 259; that stretch reads VRITDTSLRD…KTGIDFFDIA (253 aa). 15 to 16 serves as a coordination point for substrate; that stretch reads RD. Mn(2+) is bound at residue D16. H19 functions as the Proton acceptor in the catalytic mechanism. The substrate site is built by S169 and H198. Residues H198 and H200 each contribute to the Mn(2+) site. Y289 is a binding site for substrate.

It belongs to the 4-hydroxy-2-oxovalerate aldolase family.

The enzyme catalyses (S)-4-hydroxy-2-oxopentanoate = acetaldehyde + pyruvate. This chain is 4-hydroxy-2-oxovalerate aldolase 2, found in Mycobacterium marinum (strain ATCC BAA-535 / M).